The primary structure comprises 42 residues: Potassium channel toxin gamma-KTx 1.6 (42 aa).

4 cysteine pairs are disulfide-bonded: Cys5-Cys23, Cys11-Cys34, Cys20-Cys39, and Cys24-Cys41.

This sequence belongs to the ergtoxin family. Gamma-KTx 1 subfamily. In terms of tissue distribution, expressed by the venom gland.

It localises to the secreted. Blocks Kv11/ERG potassium channels. This chain is Potassium channel toxin gamma-KTx 1.6, found in Centruroides exilicauda (Bark scorpion).